We begin with the raw amino-acid sequence, 261 residues long: Na(+)-translocating NADH-quinone reductase subunit C (261 aa).

The chain crosses the membrane as a helical span at residues 11 to 31 (LLVALVVCLVSSVFVAGAAVA). Residue threonine 230 is modified to FMN phosphoryl threonine.

Belongs to the NqrC family. Composed of six subunits; NqrA, NqrB, NqrC, NqrD, NqrE and NqrF. FMN is required as a cofactor.

The protein resides in the cell inner membrane. The catalysed reaction is a ubiquinone + n Na(+)(in) + NADH + H(+) = a ubiquinol + n Na(+)(out) + NAD(+). In terms of biological role, NQR complex catalyzes the reduction of ubiquinone-1 to ubiquinol by two successive reactions, coupled with the transport of Na(+) ions from the cytoplasm to the periplasm. NqrA to NqrE are probably involved in the second step, the conversion of ubisemiquinone to ubiquinol. The protein is Na(+)-translocating NADH-quinone reductase subunit C of Pseudomonas aeruginosa (strain ATCC 15692 / DSM 22644 / CIP 104116 / JCM 14847 / LMG 12228 / 1C / PRS 101 / PAO1).